The sequence spans 199 residues: Stress response protein SCP2 (199 aa).

This sequence belongs to the CAPAB/TerDEXZ family.

Its subcellular location is the cytoplasm. The sequence is that of Stress response protein SCP2 (yceC) from Bacillus subtilis (strain 168).